The following is a 931-amino-acid chain: ORF4 polyprotein (931 aa).

Post-translationally, proteolytic processing of ORF4 polyprotein yields the VP4a, VP4b and VP4c capsid proteins.

It localises to the virion. Its function is as follows. ORF4 polyprotein codes for VP4a, VP4b, and VP4c, three of the four proteins that self-assemble to form the icosahedral capsid. The capsid is made of VP3 (coded by ORF3), VP4a, VP4b and VP4c. The polypeptide is ORF4 polyprotein (Drosophila melanogaster (Fruit fly)).